Consider the following 264-residue polypeptide: Small ribosomal subunit protein eS1 (264 aa).

N6-acetyllysine; alternate is present on K34. K34 participates in a covalent cross-link: Glycyl lysine isopeptide (Lys-Gly) (interchain with G-Cter in SUMO2); alternate. K56 is modified (N6-acetyllysine). At Y155 the chain carries ADP-ribosyltyrosine. Residues 232–264 are disordered; that stretch reads HGEGSSSGKATGDETGAKVERADGYEPPVQESV. 2 positions are modified to phosphoserine: S236 and S237. The segment covering 242-255 has biased composition (basic and acidic residues); it reads TGDETGAKVERADG. K249 carries the post-translational modification N6-acetyllysine; alternate. A Glycyl lysine isopeptide (Lys-Gly) (interchain with G-Cter in SUMO2); alternate cross-link involves residue K249. Y256 carries the phosphotyrosine modification. S263 bears the Phosphoserine mark.

It belongs to the eukaryotic ribosomal protein eS1 family. Component of the small ribosomal subunit. Mature ribosomes consist of a small (40S) and a large (60S) subunit. The 40S subunit contains about 33 different proteins and 1 molecule of RNA (18S). The 60S subunit contains about 49 different proteins and 3 molecules of RNA (28S, 5.8S and 5S). Identified in a IGF2BP1-dependent mRNP granule complex containing untranslated mRNAs. Binds with high affinity to IPO4. Interacts with DDIT3. Part of the small subunit (SSU) processome, composed of more than 70 proteins and the RNA chaperone small nucleolar RNA (snoRNA) U3. Post-translationally, ADP-ribosylated at Tyr-155 by PARP1 in presence of HPF1.

The protein localises to the cytoplasm. It localises to the nucleus. The protein resides in the nucleolus. Functionally, component of the small ribosomal subunit. The ribosome is a large ribonucleoprotein complex responsible for the synthesis of proteins in the cell. Part of the small subunit (SSU) processome, first precursor of the small eukaryotic ribosomal subunit. During the assembly of the SSU processome in the nucleolus, many ribosome biogenesis factors, an RNA chaperone and ribosomal proteins associate with the nascent pre-rRNA and work in concert to generate RNA folding, modifications, rearrangements and cleavage as well as targeted degradation of pre-ribosomal RNA by the RNA exosome. May play a role during erythropoiesis through regulation of transcription factor DDIT3. The chain is Small ribosomal subunit protein eS1 from Bos taurus (Bovine).